Consider the following 125-residue polypeptide: Large ribosomal subunit protein bL12 (125 aa).

This sequence belongs to the bacterial ribosomal protein bL12 family. As to quaternary structure, homodimer. Part of the ribosomal stalk of the 50S ribosomal subunit. Forms a multimeric L10(L12)X complex, where L10 forms an elongated spine to which 2 to 4 L12 dimers bind in a sequential fashion. Binds GTP-bound translation factors.

In terms of biological role, forms part of the ribosomal stalk which helps the ribosome interact with GTP-bound translation factors. Is thus essential for accurate translation. The chain is Large ribosomal subunit protein bL12 from Alkalilimnicola ehrlichii (strain ATCC BAA-1101 / DSM 17681 / MLHE-1).